Here is a 193-residue protein sequence, read N- to C-terminus: Peptidyl-tRNA hydrolase (193 aa).

Tyrosine 16 contacts tRNA. Residue histidine 21 is the Proton acceptor of the active site. Phenylalanine 66, asparagine 68, and asparagine 114 together coordinate tRNA.

It belongs to the PTH family. In terms of assembly, monomer.

It is found in the cytoplasm. It catalyses the reaction an N-acyl-L-alpha-aminoacyl-tRNA + H2O = an N-acyl-L-amino acid + a tRNA + H(+). Functionally, hydrolyzes ribosome-free peptidyl-tRNAs (with 1 or more amino acids incorporated), which drop off the ribosome during protein synthesis, or as a result of ribosome stalling. Its function is as follows. Catalyzes the release of premature peptidyl moieties from peptidyl-tRNA molecules trapped in stalled 50S ribosomal subunits, and thus maintains levels of free tRNAs and 50S ribosomes. In Trichlorobacter lovleyi (strain ATCC BAA-1151 / DSM 17278 / SZ) (Geobacter lovleyi), this protein is Peptidyl-tRNA hydrolase.